A 154-amino-acid chain; its full sequence is Large ribosomal subunit protein uL13 (154 aa).

The tract at residues 131–154 (DHKHEAQQPEVVDFKSMNSKNTRG) is disordered.

Belongs to the universal ribosomal protein uL13 family. As to quaternary structure, part of the 50S ribosomal subunit.

Its function is as follows. This protein is one of the early assembly proteins of the 50S ribosomal subunit, although it is not seen to bind rRNA by itself. It is important during the early stages of 50S assembly. The protein is Large ribosomal subunit protein uL13 of Maricaulis maris (strain MCS10) (Caulobacter maris).